Reading from the N-terminus, the 282-residue chain is Cytochrome c1 (282 aa).

Residues 1 to 24 form the signal peptide; it reads MTIKLRFVASLALVFGLAAASVPA. The heme c site is built by Cys62, Cys65, His66, and Met207. Residues 253–273 form a helical membrane-spanning segment; sequence WWVLGFLVIFTGLLVATKIVV.

As to quaternary structure, the main subunits of complex b-c1 are: cytochrome b, cytochrome c1 and the Rieske protein. Binds 1 heme c group covalently per subunit.

Its subcellular location is the cell membrane. Component of the ubiquinol-cytochrome c reductase complex (complex III or cytochrome b-c1 complex), which is a respiratory chain that generates an electrochemical potential coupled to ATP synthesis. c1 functions as an electron donor to cytochrome c. The polypeptide is Cytochrome c1 (petC) (Blastochloris viridis (Rhodopseudomonas viridis)).